Reading from the N-terminus, the 232-residue chain is Very-long-chain (3R)-3-hydroxyacyl-CoA dehydratase 4 (232 aa).

Residues 1 to 19 (MGPLALPAWLQPRYRKNAY) lie on the Cytoplasmic side of the membrane. A helical transmembrane segment spans residues 20–40 (LFIYYLIQFCGHSWIFTNMTV). At 41–56 (RFFSFGKDSMVDTFYA) the chain is on the lumenal side. The chain crosses the membrane as a helical span at residues 57–77 (IGLVMRLCQSVSLLELLHIYV). Over 78–112 (GIESNHLLPRFLQLTERIIILFVVITSQEEVQEKY) the chain is Cytoplasmic. Residues 113–133 (VVCVLFVFWNLLDMVRYTYSM) form a helical membrane-spanning segment. Topologically, residues 134–135 (LS) are lumenal. Residues 136-156 (VIGISYAVLTWLSQTLWMPIY) form a helical membrane-spanning segment. The active site involves Tyr-156. Residue Pro-157 is a topological domain, cytoplasmic. A helical membrane pass occupies residues 158-178 (LCVLAEAFAIYQSLPYFESFG). The active site involves Glu-163. Residues 179–189 (TYSTKLPFDLS) lie on the Lumenal side of the membrane. A helical transmembrane segment spans residues 190–210 (IYFPYVLKIYLMMLFIGMYFT). Residues 211 to 232 (YSHLYSERRDILGIFPIKKKKM) are Cytoplasmic-facing.

It belongs to the very long-chain fatty acids dehydratase HACD family. As to quaternary structure, may interact with enzymes of the ELO family (including ELOVL1); with those enzymes that mediate condensation, the first of the four steps of the reaction cycle responsible for fatty acids elongation, may be part of a larger fatty acids elongase complex. Highly expressed in leukocytes, and low expression in heart, spleen, kidney, and placenta.

It is found in the endoplasmic reticulum membrane. The catalysed reaction is a very-long-chain (3R)-3-hydroxyacyl-CoA = a very-long-chain (2E)-enoyl-CoA + H2O. It carries out the reaction (3R)-hydroxyhexadecanoyl-CoA = (2E)-hexadecenoyl-CoA + H2O. The protein operates within lipid metabolism; fatty acid biosynthesis. Its function is as follows. Catalyzes the third of the four reactions of the long-chain fatty acids elongation cycle. This endoplasmic reticulum-bound enzymatic process, allows the addition of two carbons to the chain of long- and very long-chain fatty acids/VLCFAs per cycle. This enzyme catalyzes the dehydration of the 3-hydroxyacyl-CoA intermediate into trans-2,3-enoyl-CoA, within each cycle of fatty acid elongation. Thereby, it participates in the production of VLCFAs of different chain lengths that are involved in multiple biological processes as precursors of membrane lipids and lipid mediators. This chain is Very-long-chain (3R)-3-hydroxyacyl-CoA dehydratase 4, found in Homo sapiens (Human).